A 220-amino-acid chain; its full sequence is Claudin-22 (220 aa).

Topologically, residues 1–10 (MGLVFRTATQ) are cytoplasmic. A helical membrane pass occupies residues 11 to 31 (AAALLLSLLGWVLSCLTNYLP). The Extracellular portion of the chain corresponds to 32–81 (HWKNLNLELNEMENWTMGLWKSCVIQEEVGRQCKDFDSFLALPAELQVSR). The helical transmembrane segment at 82–102 (VLMSLCNGLGLLGLLASGCGL) threads the bilayer. The Cytoplasmic portion of the chain corresponds to 103-120 (DCLRLGETQEGLKKRLLT). A helical transmembrane segment spans residues 121–141 (LGGTLLWTSGVMVLVPVSWVA). Residues 142–164 (HKTVREFWDETMPEIVPRWEFGE) lie on the Extracellular side of the membrane. The chain crosses the membrane as a helical span at residues 165-185 (ALFLGWFAGFCLVLGGCVLHC). The Cytoplasmic segment spans residues 186-220 (AACWSPAPAASSHYAVAGPRDHQQHLELKQANPEI).

This sequence belongs to the claudin family.

It localises to the cell junction. The protein resides in the tight junction. The protein localises to the cell membrane. Functionally, plays a major role in tight junction-specific obliteration of the intercellular space, through calcium-independent cell-adhesion activity. The sequence is that of Claudin-22 (Cldn22) from Mus musculus (Mouse).